The chain runs to 523 residues: Probable malate:quinone oxidoreductase 1 (523 aa).

This sequence belongs to the MQO family. The cofactor is FAD.

The enzyme catalyses (S)-malate + a quinone = a quinol + oxaloacetate. It functions in the pathway carbohydrate metabolism; tricarboxylic acid cycle; oxaloacetate from (S)-malate (quinone route): step 1/1. The protein is Probable malate:quinone oxidoreductase 1 of Pseudomonas aeruginosa (strain ATCC 15692 / DSM 22644 / CIP 104116 / JCM 14847 / LMG 12228 / 1C / PRS 101 / PAO1).